We begin with the raw amino-acid sequence, 565 residues long: CTP synthase (565 aa).

The tract at residues 1–272 (MARPKNVKHI…DLRVMKKLGL (272 aa)) is amidoligase domain. A CTP-binding site is contributed by S18. S18 lines the UTP pocket. ATP is bound at residue 19–24 (SLGKGI). An L-glutamine-binding site is contributed by Y59. An ATP-binding site is contributed by D76. Mg(2+) is bound by residues D76 and E146. Residues 153-155 (DIE), 193-198 (KTKPTQ), and K229 contribute to the CTP site. Residues 193–198 (KTKPTQ) and K229 contribute to the UTP site. Residues 299–543 (TIGICGKYTE…VHAAKEFAQG (245 aa)) enclose the Glutamine amidotransferase type-1 domain. G363 is an L-glutamine binding site. C390 serves as the catalytic Nucleophile; for glutamine hydrolysis. Residues 391–394 (LGMQ), E414, and R471 contribute to the L-glutamine site. Active-site residues include H516 and E518.

Belongs to the CTP synthase family. Homotetramer.

The catalysed reaction is UTP + L-glutamine + ATP + H2O = CTP + L-glutamate + ADP + phosphate + 2 H(+). It carries out the reaction L-glutamine + H2O = L-glutamate + NH4(+). The enzyme catalyses UTP + NH4(+) + ATP = CTP + ADP + phosphate + 2 H(+). It functions in the pathway pyrimidine metabolism; CTP biosynthesis via de novo pathway; CTP from UDP: step 2/2. With respect to regulation, allosterically activated by GTP, when glutamine is the substrate; GTP has no effect on the reaction when ammonia is the substrate. The allosteric effector GTP functions by stabilizing the protein conformation that binds the tetrahedral intermediate(s) formed during glutamine hydrolysis. Inhibited by the product CTP, via allosteric rather than competitive inhibition. Functionally, catalyzes the ATP-dependent amination of UTP to CTP with either L-glutamine or ammonia as the source of nitrogen. Regulates intracellular CTP levels through interactions with the four ribonucleotide triphosphates. The polypeptide is CTP synthase (Chlorobaculum tepidum (strain ATCC 49652 / DSM 12025 / NBRC 103806 / TLS) (Chlorobium tepidum)).